Reading from the N-terminus, the 152-residue chain is Ribosome maturation factor RimP (152 aa).

This sequence belongs to the RimP family.

It localises to the cytoplasm. Its function is as follows. Required for maturation of 30S ribosomal subunits. The polypeptide is Ribosome maturation factor RimP (Burkholderia lata (strain ATCC 17760 / DSM 23089 / LMG 22485 / NCIMB 9086 / R18194 / 383)).